Consider the following 177-residue polypeptide: Biotin-dependent acetyl-/propionyl-coenzyme A carboxylase epsilon subunit (177 aa).

The segment at 1–112 is disordered; it reads MGTCPCESSE…TEKPLHPHEP (112 aa). A compositionally biased stretch (polar residues) spans 18 to 100; the sequence is VSGTNEVSDG…SDGNETNNPA (83 aa).

Interacts with the AccA3/AccD5 biotin-dependent acyl-CoA carboxylase complex. Interacts with the AccA3/AccD6 complex. Is also part of the long-chain acyl-CoA carboxylase (LCC) complex, which is composed of AccA3, AccD4, AccD5 and AccE5. The four subunits are essential for activity, but AccD5, together with AccE5, probably plays a structural role rather than a catalytic one.

Functionally, stimulates activity of the AccA3/AccD5 biotin-dependent acyl-CoA carboxylase complex. Interacts with AccD5 and modulates its carboxylase activity for acetyl-CoA and propionyl-CoA. Inhibits activity of the AccA3/AccD6 complex. Is also required for the activity of the long-chain acyl-CoA carboxylase (LCC) complex. In Mycobacterium tuberculosis (strain ATCC 25618 / H37Rv), this protein is Biotin-dependent acetyl-/propionyl-coenzyme A carboxylase epsilon subunit.